Consider the following 225-residue polypeptide: ATP-dependent dethiobiotin synthetase BioD (225 aa).

Position 12–17 (12–17) interacts with ATP; the sequence is EVGKTY. Residue T16 participates in Mg(2+) binding. Residue K37 is part of the active site. S41 serves as a coordination point for substrate. Residues D52, 114-117, and 174-175 contribute to the ATP site; these read EGAG and NC. Mg(2+)-binding residues include D52 and E114.

This sequence belongs to the dethiobiotin synthetase family. As to quaternary structure, homodimer. Mg(2+) serves as cofactor.

Its subcellular location is the cytoplasm. It catalyses the reaction (7R,8S)-7,8-diammoniononanoate + CO2 + ATP = (4R,5S)-dethiobiotin + ADP + phosphate + 3 H(+). It functions in the pathway cofactor biosynthesis; biotin biosynthesis; biotin from 7,8-diaminononanoate: step 1/2. In terms of biological role, catalyzes a mechanistically unusual reaction, the ATP-dependent insertion of CO2 between the N7 and N8 nitrogen atoms of 7,8-diaminopelargonic acid (DAPA, also called 7,8-diammoniononanoate) to form a ureido ring. In Francisella tularensis subsp. mediasiatica (strain FSC147), this protein is ATP-dependent dethiobiotin synthetase BioD.